A 294-amino-acid polypeptide reads, in one-letter code: Probable 2-(5''-triphosphoribosyl)-3'-dephosphocoenzyme-A synthase (294 aa).

The protein belongs to the CitG/MdcB family.

The catalysed reaction is 3'-dephospho-CoA + ATP = 2'-(5''-triphospho-alpha-D-ribosyl)-3'-dephospho-CoA + adenine. The sequence is that of Probable 2-(5''-triphosphoribosyl)-3'-dephosphocoenzyme-A synthase from Streptococcus pyogenes serotype M18 (strain MGAS8232).